Consider the following 187-residue polypeptide: Protein GrpE (187 aa).

The segment at 1 to 30 (MEKKETKSESEKTNKQDNKNTKSQKKENLN) is disordered.

Belongs to the GrpE family. As to quaternary structure, homodimer.

Its subcellular location is the cytoplasm. Participates actively in the response to hyperosmotic and heat shock by preventing the aggregation of stress-denatured proteins, in association with DnaK and GrpE. It is the nucleotide exchange factor for DnaK and may function as a thermosensor. Unfolded proteins bind initially to DnaJ; upon interaction with the DnaJ-bound protein, DnaK hydrolyzes its bound ATP, resulting in the formation of a stable complex. GrpE releases ADP from DnaK; ATP binding to DnaK triggers the release of the substrate protein, thus completing the reaction cycle. Several rounds of ATP-dependent interactions between DnaJ, DnaK and GrpE are required for fully efficient folding. The chain is Protein GrpE from Borreliella burgdorferi (strain ATCC 35210 / DSM 4680 / CIP 102532 / B31) (Borrelia burgdorferi).